A 392-amino-acid polypeptide reads, in one-letter code: tRNA-specific 2-thiouridylase MnmA (392 aa).

ATP is bound by residues Ala-18–Ser-25 and Leu-44. Catalysis depends on Cys-112, which acts as the Nucleophile. Cysteines 112 and 208 form a disulfide. ATP is bound at residue Gly-136. Residues Arg-158 to Gln-160 form an interaction with tRNA region. The Cysteine persulfide intermediate role is filled by Cys-208.

Belongs to the MnmA/TRMU family.

The protein localises to the cytoplasm. The enzyme catalyses S-sulfanyl-L-cysteinyl-[protein] + uridine(34) in tRNA + AH2 + ATP = 2-thiouridine(34) in tRNA + L-cysteinyl-[protein] + A + AMP + diphosphate + H(+). Catalyzes the 2-thiolation of uridine at the wobble position (U34) of tRNA, leading to the formation of s(2)U34. This Rhodospirillum centenum (strain ATCC 51521 / SW) protein is tRNA-specific 2-thiouridylase MnmA.